Here is an 80-residue protein sequence, read N- to C-terminus: Large ribosomal subunit protein uL24 (80 aa).

It belongs to the universal ribosomal protein uL24 family. As to quaternary structure, part of the 50S ribosomal subunit.

In terms of biological role, one of two assembly initiator proteins, it binds directly to the 5'-end of the 23S rRNA, where it nucleates assembly of the 50S subunit. Functionally, one of the proteins that surrounds the polypeptide exit tunnel on the outside of the subunit. This chain is Large ribosomal subunit protein uL24, found in Chlorobaculum tepidum (strain ATCC 49652 / DSM 12025 / NBRC 103806 / TLS) (Chlorobium tepidum).